We begin with the raw amino-acid sequence, 400 residues long: Queuine tRNA-ribosyltransferase catalytic subunit (400 aa).

D89 functions as the Proton acceptor in the catalytic mechanism. Substrate is bound by residues D89 to F93, D143, Q185, and G212. Residues G243 to D249 are RNA binding. D262 functions as the Nucleophile in the catalytic mechanism. The interval T267–R271 is RNA binding; important for wobble base 34 recognition. Zn(2+) contacts are provided by C301, C303, C306, and H331.

Belongs to the queuine tRNA-ribosyltransferase family. In terms of assembly, heterodimer of a catalytic subunit and an accessory subunit. Zn(2+) serves as cofactor.

The protein resides in the cytoplasm. The catalysed reaction is guanosine(34) in tRNA + queuine = queuosine(34) in tRNA + guanine. Catalytic subunit of the queuine tRNA-ribosyltransferase (TGT) that catalyzes the base-exchange of a guanine (G) residue with queuine (Q) at position 34 (anticodon wobble position) in tRNAs with GU(N) anticodons (tRNA-Asp, -Asn, -His and -Tyr), resulting in the hypermodified nucleoside queuosine (7-(((4,5-cis-dihydroxy-2-cyclopenten-1-yl)amino)methyl)-7-deazaguanosine). Catalysis occurs through a double-displacement mechanism. The nucleophile active site attacks the C1' of nucleotide 34 to detach the guanine base from the RNA, forming a covalent enzyme-RNA intermediate. The proton acceptor active site deprotonates the incoming queuine, allowing a nucleophilic attack on the C1' of the ribose to form the product. The polypeptide is Queuine tRNA-ribosyltransferase catalytic subunit (Caenorhabditis elegans).